A 1153-amino-acid polypeptide reads, in one-letter code: Cingulin (1153 aa).

The segment at 1-342 (MAEPRGPVDH…LVMTTGSAKV (342 aa)) is head. The interval 17 to 37 (ITEPAGDAQMRTGRRPAKDAR) is disordered. The ZIM signature appears at 38 to 52 (ANTYGVAVRVQGIAG). The interaction with TJP1/ZO1 stretch occupies residues 44–57 (AVRVQGIAGQPFVV). Residues Ser-86, Ser-126, Ser-128, Ser-131, Ser-146, Ser-205, Ser-208, and Ser-324 each carry the phosphoserine modification. 2 disordered regions span residues 131–151 (SLLG…LELG) and 177–253 (DRHQ…SRAR). Residues 207-220 (DSRHLRDPPEDRRS) show a composition bias toward basic and acidic residues. The stretch at 343-1110 (LAGQGELAQK…ALEKDSWRKA (768 aa)) forms a coiled coil. An N6-acetyllysine modification is found at Lys-562. 3 disordered regions span residues 755 to 796 (AQRG…QKRL), 823 to 861 (QSQL…LSRL), and 1110 to 1131 (AARS…EEFD). Composition is skewed to basic and acidic residues over residues 772-796 (ALEE…QKRL) and 827-853 (EDYK…EAEK). Residues 1111 to 1153 (ARSAAESSLQQEGLSSDEEFDGVYNPNSIASLLTESGLQTSSC) are tail. The span at 1115-1124 (AESSLQQEGL) shows a compositional bias: polar residues. Residues Ser-1125 and Ser-1126 each carry the phosphoserine modification.

Belongs to the cingulin family. As to quaternary structure, homodimer. Interacts with TJP1/ZO1 and SPEF1.

Its subcellular location is the cell junction. The protein resides in the tight junction. Probably plays a role in the formation and regulation of the tight junction (TJ) paracellular permeability barrier. This Sorex araneus (Eurasian common shrew) protein is Cingulin.